The sequence spans 120 residues: Large ribosomal subunit protein bL19 (120 aa).

Belongs to the bacterial ribosomal protein bL19 family.

In terms of biological role, this protein is located at the 30S-50S ribosomal subunit interface and may play a role in the structure and function of the aminoacyl-tRNA binding site. The sequence is that of Large ribosomal subunit protein bL19 from Chlorobium chlorochromatii (strain CaD3).